A 255-amino-acid chain; its full sequence is Zinc import ATP-binding protein ZnuC (255 aa).

One can recognise an ABC transporter domain in the interval 4-219 (VDVDGLSLRY…PEYRALFGTG (216 aa)). ATP is bound at residue 36 to 43 (GPNGSGKT). The tract at residues 234–255 (EHDHHDGCAHGQATEDRTEAAE) is disordered.

It belongs to the ABC transporter superfamily. Zinc importer (TC 3.A.1.15.5) family. The complex is composed of two ATP-binding proteins (ZnuC), two transmembrane proteins (ZnuB) and a solute-binding protein (ZnuA).

The protein localises to the cell inner membrane. It carries out the reaction Zn(2+)(out) + ATP(in) + H2O(in) = Zn(2+)(in) + ADP(in) + phosphate(in) + H(+)(in). Its function is as follows. Part of the ABC transporter complex ZnuABC involved in zinc import. Responsible for energy coupling to the transport system. The polypeptide is Zinc import ATP-binding protein ZnuC (Roseobacter denitrificans (strain ATCC 33942 / OCh 114) (Erythrobacter sp. (strain OCh 114))).